The sequence spans 118 residues: Large ribosomal subunit protein bL20 (118 aa).

This sequence belongs to the bacterial ribosomal protein bL20 family.

Functionally, binds directly to 23S ribosomal RNA and is necessary for the in vitro assembly process of the 50S ribosomal subunit. It is not involved in the protein synthesizing functions of that subunit. This Clostridioides difficile (strain 630) (Peptoclostridium difficile) protein is Large ribosomal subunit protein bL20.